Reading from the N-terminus, the 194-residue chain is Gonadal protein gdl (194 aa).

Belongs to the gonadal family. In terms of tissue distribution, in stage 6-14 egg chamber nurse cells and oocytes of adult females and spermatocyte cysts and bundles of maturing sperm of larval, pupal and adult males.

In Drosophila melanogaster (Fruit fly), this protein is Gonadal protein gdl (gdl).